The chain runs to 150 residues: Arginine repressor (150 aa).

It belongs to the ArgR family.

It is found in the cytoplasm. The protein operates within amino-acid biosynthesis; L-arginine biosynthesis [regulation]. Its function is as follows. Regulates arginine biosynthesis genes. The chain is Arginine repressor from Clostridium botulinum (strain Eklund 17B / Type B).